The primary structure comprises 219 residues: Large ribosomal subunit protein uL3 (219 aa).

The disordered stretch occupies residues 140–163 (SASHGAHRNHRKPGSIGASSTPSR).

It belongs to the universal ribosomal protein uL3 family. Part of the 50S ribosomal subunit. Forms a cluster with proteins L14 and L19.

Its function is as follows. One of the primary rRNA binding proteins, it binds directly near the 3'-end of the 23S rRNA, where it nucleates assembly of the 50S subunit. In Leifsonia xyli subsp. xyli (strain CTCB07), this protein is Large ribosomal subunit protein uL3.